Here is a 244-residue protein sequence, read N- to C-terminus: Mitochondrial import inner membrane translocase subunit Tim21 (244 aa).

Residues 1-18 constitute a mitochondrion transit peptide; it reads MICAFLRVVQHAEKLHGS. Positions 65-96 are disordered; that stretch reads TQGPDPRKAKEDSTKQVSIRRNQREETGVSMS. The span at 69 to 78 shows a compositional bias: basic and acidic residues; sequence DPRKAKEDST. A helical transmembrane segment spans residues 107 to 127; sequence SYLIVVLFGVGLTGGLLYAIF.

The protein belongs to the TIM21 family. Component of the TIM23 complex. Component of the MITRAC (mitochondrial translation regulation assembly intermediate of cytochrome c oxidase complex) complex, the core components of this complex being COA3/MITRAC12 and COX14. Interacts with COA3 and MT-CO1/COX1.

Its subcellular location is the mitochondrion membrane. Its function is as follows. Participates in the translocation of transit peptide-containing proteins across the mitochondrial inner membrane. Also required for assembly of mitochondrial respiratory chain complex I and complex IV as component of the MITRAC (mitochondrial translation regulation assembly intermediate of cytochrome c oxidase complex) complex. Probably shuttles between the presequence translocase and respiratory-chain assembly intermediates in a process that promotes incorporation of early nuclear-encoded subunits into these complexes. This chain is Mitochondrial import inner membrane translocase subunit Tim21 (Timm21), found in Mus musculus (Mouse).